The following is a 468-amino-acid chain: Replication factor C large subunit (468 aa).

50-57 contacts ATP; that stretch reads GPPGSGKT. A disordered region spans residues 422-456; sequence EEKAVEEKVEEEEAEEEEEEERKEEEKPKAEKKKG. The span at 429 to 444 shows a compositional bias: acidic residues; it reads KVEEEEAEEEEEEERK.

The protein belongs to the activator 1 small subunits family. RfcL subfamily. In terms of assembly, heteromultimer composed of small subunits (RfcS) and large subunits (RfcL).

Part of the RFC clamp loader complex which loads the PCNA sliding clamp onto DNA. The sequence is that of Replication factor C large subunit from Pyrococcus horikoshii (strain ATCC 700860 / DSM 12428 / JCM 9974 / NBRC 100139 / OT-3).